We begin with the raw amino-acid sequence, 337 residues long: DNA replication regulator sld2 (337 aa).

2 positions are modified to phosphothreonine; by cdc2: Thr60 and Thr74. Residues 71–97 (KFQTPTKQRAETEANESPKAPRNDYLQ) are disordered. A Phosphoserine; by cdc2 modification is found at Ser87. Phosphothreonine; by cdc2 is present on residues Thr99 and Thr154. Phosphoserine is present on Ser183. The interval 258–302 (SMNLSKSHLEGLPEIDEDAENGIDDNEDTTASKDSSPFLDLQSER) is disordered. Residues 270-285 (PEIDEDAENGIDDNED) are compositionally biased toward acidic residues.

This sequence belongs to the SLD2 family. As to quaternary structure, interacts with rad4. In terms of processing, phosphorylated by cdc2 at the onset of S-phase.

It is found in the cytoplasm. It localises to the nucleus. Functionally, has a role in the initiation of DNA replication. Required at S-phase checkpoint. In Schizosaccharomyces pombe (strain 972 / ATCC 24843) (Fission yeast), this protein is DNA replication regulator sld2 (drc1).